We begin with the raw amino-acid sequence, 609 residues long: Polyadenylate-binding protein 7 (609 aa).

RRM domains follow at residues 24-102 (ASLY…WSVR), 112-189 (GNVF…KFMK), 201-278 (TNLY…RAQK), and 304-381 (SNIY…IAQK). In terms of domain architecture, PABC spans 509-586 (EMKKSIQQRQ…AFEVLKSSKT (78 aa)).

The protein belongs to the polyadenylate-binding protein type-1 family. In terms of tissue distribution, expressed predominantly in siliques.

The protein resides in the cytoplasm. The protein localises to the nucleus. Functionally, binds the poly(A) tail of mRNA. Appears to be an important mediator of the multiple roles of the poly(A) tail in mRNA biogenesis, stability and translation. The sequence is that of Polyadenylate-binding protein 7 (PAB7) from Arabidopsis thaliana (Mouse-ear cress).